The chain runs to 645 residues: Threonine--tRNA ligase (645 aa).

Residues 1 to 63 (MDQIKIKFPD…ESDGDIEIVT (63 aa)) enclose the TGS domain. The tract at residues 242–540 (DHRKIGKELE…LTEETKGAFP (299 aa)) is catalytic. Positions 336, 387, and 517 each coordinate Zn(2+).

It belongs to the class-II aminoacyl-tRNA synthetase family. As to quaternary structure, homodimer. The cofactor is Zn(2+).

It is found in the cytoplasm. The catalysed reaction is tRNA(Thr) + L-threonine + ATP = L-threonyl-tRNA(Thr) + AMP + diphosphate + H(+). Functionally, catalyzes the attachment of threonine to tRNA(Thr) in a two-step reaction: L-threonine is first activated by ATP to form Thr-AMP and then transferred to the acceptor end of tRNA(Thr). Also edits incorrectly charged L-seryl-tRNA(Thr). The sequence is that of Threonine--tRNA ligase from Staphylococcus saprophyticus subsp. saprophyticus (strain ATCC 15305 / DSM 20229 / NCIMB 8711 / NCTC 7292 / S-41).